We begin with the raw amino-acid sequence, 863 residues long: FO synthase (863 aa).

Radical SAM core domains follow at residues 91–343 (ITYS…APPN) and 551–792 (VTFV…SHIQ). The interval 92 to 424 (TYSRKVFIPV…PRVRGHVVAL (333 aa)) is cofG-like. [4Fe-4S] cluster-binding residues include Cys105, Cys109, Cys112, Cys565, Cys569, and Cys572. A cofH-like region spans residues 528 to 861 (DGPALEAVTA…RQRTTTYALR (334 aa)).

The protein in the N-terminal section; belongs to the radical SAM superfamily. CofG family. This sequence in the C-terminal section; belongs to the radical SAM superfamily. CofH family. Requires [4Fe-4S] cluster as cofactor.

It catalyses the reaction 5-amino-6-(D-ribitylamino)uracil + L-tyrosine + S-adenosyl-L-methionine = 5-amino-5-(4-hydroxybenzyl)-6-(D-ribitylimino)-5,6-dihydrouracil + 2-iminoacetate + 5'-deoxyadenosine + L-methionine + H(+). It carries out the reaction 5-amino-5-(4-hydroxybenzyl)-6-(D-ribitylimino)-5,6-dihydrouracil + S-adenosyl-L-methionine = 7,8-didemethyl-8-hydroxy-5-deazariboflavin + 5'-deoxyadenosine + L-methionine + NH4(+) + H(+). It participates in cofactor biosynthesis; coenzyme F0 biosynthesis. Functionally, catalyzes the radical-mediated synthesis of 7,8-didemethyl-8-hydroxy-5-deazariboflavin (FO) from 5-amino-6-(D-ribitylamino)uracil and L-tyrosine. This is FO synthase (fbiC) from Mycobacterium leprae (strain TN).